We begin with the raw amino-acid sequence, 143 residues long: 3-hydroxyacyl-[acyl-carrier-protein] dehydratase FabZ (143 aa).

The active site involves His-48.

This sequence belongs to the thioester dehydratase family. FabZ subfamily.

The protein resides in the cytoplasm. It carries out the reaction a (3R)-hydroxyacyl-[ACP] = a (2E)-enoyl-[ACP] + H2O. Its function is as follows. Involved in unsaturated fatty acids biosynthesis. Catalyzes the dehydration of short chain beta-hydroxyacyl-ACPs and long chain saturated and unsaturated beta-hydroxyacyl-ACPs. The protein is 3-hydroxyacyl-[acyl-carrier-protein] dehydratase FabZ of Roseiflexus sp. (strain RS-1).